We begin with the raw amino-acid sequence, 567 residues long: Urease subunit alpha (567 aa).

Ni(2+)-binding residues include His134, His136, and Lys217. Lys217 bears the N6-carboxylysine mark. His219 provides a ligand contact to substrate. His246 and His272 together coordinate Ni(2+). His320 acts as the Proton donor in catalysis. Residue Asp360 coordinates Ni(2+).

This sequence belongs to the metallo-dependent hydrolases superfamily. Urease alpha subunit family. Heterotrimer of UreA (gamma), UreB (beta) and UreC (alpha) subunits. Three heterotrimers associate to form the active enzyme. Ni cation serves as cofactor. In terms of processing, carboxylation allows a single lysine to coordinate two nickel ions.

Its subcellular location is the cytoplasm. The enzyme catalyses urea + 2 H2O + H(+) = hydrogencarbonate + 2 NH4(+). It participates in nitrogen metabolism; urea degradation; CO(2) and NH(3) from urea (urease route): step 1/1. The sequence is that of Urease subunit alpha from Pseudomonas putida (strain GB-1).